Consider the following 405-residue polypeptide: Arginine deiminase (405 aa).

C395 (amidino-cysteine intermediate) is an active-site residue.

Belongs to the arginine deiminase family.

Its subcellular location is the cytoplasm. It carries out the reaction L-arginine + H2O = L-citrulline + NH4(+). The protein operates within amino-acid degradation; L-arginine degradation via ADI pathway; carbamoyl phosphate from L-arginine: step 1/2. The polypeptide is Arginine deiminase (Rhodococcus erythropolis (strain PR4 / NBRC 100887)).